The primary structure comprises 213 residues: Urease accessory protein UreG (213 aa).

17-24 (GPVGSGKT) provides a ligand contact to GTP.

The protein belongs to the SIMIBI class G3E GTPase family. UreG subfamily. As to quaternary structure, homodimer. UreD, UreF and UreG form a complex that acts as a GTP-hydrolysis-dependent molecular chaperone, activating the urease apoprotein by helping to assemble the nickel containing metallocenter of UreC. The UreE protein probably delivers the nickel.

It is found in the cytoplasm. Its function is as follows. Facilitates the functional incorporation of the urease nickel metallocenter. This process requires GTP hydrolysis, probably effectuated by UreG. The polypeptide is Urease accessory protein UreG (Delftia acidovorans (strain DSM 14801 / SPH-1)).